We begin with the raw amino-acid sequence, 129 residues long: Cytochrome c' (129 aa).

Arg12, Gln13, Thr69, Glu70, Cys119, Cys122, and His123 together coordinate heme c.

In terms of processing, binds 1 heme c group covalently per subunit.

In terms of biological role, cytochrome c' is the most widely occurring bacterial c-type cytochrome. Cytochromes c' are high-spin proteins and the heme has no sixth ligand. Their exact function is not known. In Rubrivivax gelatinosus (Rhodocyclus gelatinosus), this protein is Cytochrome c'.